A 537-amino-acid chain; its full sequence is Phenylalanine--tRNA ligase beta subunit (537 aa).

A B5 domain is found at 268 to 343 (FNFRPYRLNL…KSYGIENVRE (76 aa)). 4 residues coordinate Mg(2+): D321, D327, E330, and D331.

Belongs to the phenylalanyl-tRNA synthetase beta subunit family. Type 2 subfamily. In terms of assembly, tetramer of two alpha and two beta subunits. Mg(2+) serves as cofactor.

It localises to the cytoplasm. The enzyme catalyses tRNA(Phe) + L-phenylalanine + ATP = L-phenylalanyl-tRNA(Phe) + AMP + diphosphate + H(+). The protein is Phenylalanine--tRNA ligase beta subunit of Thermoplasma volcanium (strain ATCC 51530 / DSM 4299 / JCM 9571 / NBRC 15438 / GSS1).